A 313-amino-acid polypeptide reads, in one-letter code: D-beta-D-heptose 7-phosphate kinase (313 aa).

Asn196 to Glu199 is a binding site for ATP. Residue Asp264 is part of the active site.

It catalyses the reaction D-glycero-beta-D-manno-heptose 7-phosphate + ATP = D-glycero-beta-D-manno-heptose 1,7-bisphosphate + ADP + H(+). Its pathway is nucleotide-sugar biosynthesis; ADP-L-glycero-beta-D-manno-heptose biosynthesis; ADP-L-glycero-beta-D-manno-heptose from D-glycero-beta-D-manno-heptose 7-phosphate: step 1/4. It participates in bacterial outer membrane biogenesis; LPS core biosynthesis. Its function is as follows. Catalyzes the phosphorylation of D-glycero-D-manno-heptose 7-phosphate at the C-1 position to selectively form D-glycero-beta-D-manno-heptose-1,7-bisphosphate. The polypeptide is D-beta-D-heptose 7-phosphate kinase (rfaE) (Bordetella bronchiseptica (strain ATCC BAA-588 / NCTC 13252 / RB50) (Alcaligenes bronchisepticus)).